Reading from the N-terminus, the 869-residue chain is TATA box-binding protein-associated factor RNA polymerase I subunit C (869 aa).

2 disordered regions span residues S605–T629 and G729–F869. T834 is subject to Phosphothreonine. Positions P835–P860 are enriched in polar residues. A Phosphoserine modification is found at S848.

Component of the transcription factor SL1/TIF-IB complex, composed of TBP and at least TAF1A, TAF1B, TAF1C and TAF1D. In the complex interacts directly with TBP, TAF1A and TAF1B. Interaction of the SL1/TIF-IB subunits with TBP excludes interaction of TBP with the transcription factor IID (TFIID) subunits. Interacts with MYC and RRN3. Interacts with p53/TP53; the interaction prevents the association of SL1/TIF-IB with UBTF and represses RNA polymerase I transcription. Part of Pol I pre-initiation complex (PIC), in which Pol I core assembles with RRN3 and promoter-bound UTBF and SL1/TIF-IB complex.

The protein localises to the nucleus. It localises to the nucleolus. In terms of biological role, component of the transcription factor SL1/TIF-IB complex, which is involved in the assembly of the PIC (pre-initiation complex) during RNA polymerase I-dependent transcription. The rate of PIC formation probably is primarily dependent on the rate of association of SL1/TIF-IB with the rDNA promoter. SL1/TIF-IB is involved in stabilization of nucleolar transcription factor 1/UBTF on rDNA. Formation of SL1/TIF-IB excludes the association of TBP with TFIID subunits. Recruits RNA polymerase I to the rRNA gene promoter via interaction with RRN3. This is TATA box-binding protein-associated factor RNA polymerase I subunit C (TAF1C) from Homo sapiens (Human).